The following is a 420-amino-acid chain: Succinate--CoA ligase [GDP-forming] subunit beta, mitochondrial (420 aa).

In terms of domain architecture, ATP-grasp spans lysine 35–phenylalanine 263. Residues glutamine 46, glycine 78–glycine 80, and valine 135 each bind GTP. 2 residues coordinate Mg(2+): asparagine 232 and aspartate 246. Residues asparagine 297 and glycine 354–methionine 356 contribute to the substrate site.

Belongs to the succinate/malate CoA ligase beta subunit family. GTP-specific subunit beta subfamily. In terms of assembly, heterodimer of an alpha and a beta subunit. The beta subunit determines specificity for GTP. Mg(2+) serves as cofactor.

It localises to the mitochondrion. It carries out the reaction GTP + succinate + CoA = succinyl-CoA + GDP + phosphate. It participates in carbohydrate metabolism; tricarboxylic acid cycle; succinate from succinyl-CoA (ligase route): step 1/1. Functionally, GTP-specific succinyl-CoA synthetase functions in the citric acid cycle (TCA), coupling the hydrolysis of succinyl-CoA to the synthesis of GTP and thus represents the only step of substrate-level phosphorylation in the TCA. The beta subunit provides nucleotide specificity of the enzyme and binds the substrate succinate, while the binding sites for coenzyme A and phosphate are found in the alpha subunit. In Dictyostelium discoideum (Social amoeba), this protein is Succinate--CoA ligase [GDP-forming] subunit beta, mitochondrial (scsB).